We begin with the raw amino-acid sequence, 302 residues long: Phosphoribosylaminoimidazole-succinocarboxamide synthase (302 aa).

The protein belongs to the SAICAR synthetase family.

It catalyses the reaction 5-amino-1-(5-phospho-D-ribosyl)imidazole-4-carboxylate + L-aspartate + ATP = (2S)-2-[5-amino-1-(5-phospho-beta-D-ribosyl)imidazole-4-carboxamido]succinate + ADP + phosphate + 2 H(+). It functions in the pathway purine metabolism; IMP biosynthesis via de novo pathway; 5-amino-1-(5-phospho-D-ribosyl)imidazole-4-carboxamide from 5-amino-1-(5-phospho-D-ribosyl)imidazole-4-carboxylate: step 1/2. This Polaromonas sp. (strain JS666 / ATCC BAA-500) protein is Phosphoribosylaminoimidazole-succinocarboxamide synthase.